The following is a 239-amino-acid chain: Phosphoribosylaminoimidazole-succinocarboxamide synthase (239 aa).

Belongs to the SAICAR synthetase family.

The enzyme catalyses 5-amino-1-(5-phospho-D-ribosyl)imidazole-4-carboxylate + L-aspartate + ATP = (2S)-2-[5-amino-1-(5-phospho-beta-D-ribosyl)imidazole-4-carboxamido]succinate + ADP + phosphate + 2 H(+). The protein operates within purine metabolism; IMP biosynthesis via de novo pathway; 5-amino-1-(5-phospho-D-ribosyl)imidazole-4-carboxamide from 5-amino-1-(5-phospho-D-ribosyl)imidazole-4-carboxylate: step 1/2. The protein is Phosphoribosylaminoimidazole-succinocarboxamide synthase of Chlorobium luteolum (strain DSM 273 / BCRC 81028 / 2530) (Pelodictyon luteolum).